The sequence spans 555 residues: MEPVTKWSPKQVVDWTRGLDDCLQPYVHKFEREKIDGEQLLKISHQDLEELGVTRIGHQELVLEAVDLLCALNYGLETDTMKNLVLKLRASSHNLQNYISSRRKSPAYDGNTSRKPPNEFLTSVVELIGAAKALLAWLDRAPFTGITDLSVTKNKIIQLCLDLTTAVQKDCLIAEMEDKVLNVVKVLNGICDKTMRSTTDPVMSQCACLEEVHLPNVRPGEGLGMYIKSTYDGLHVITGTTENSPADRSQKIHAGDEVIQVNRQTVVGWQLKNLVRKLRENPTGVVLLLKKRPTGSFSFTPAPLKNLRWKPPLVQTSPPPTTTQSPESTMDASLKKEKPAILDLYIPPPPAVPYSPRDENVSFGYRGHSKSKQPLPVRKGSESPNSFLDQESQRRRFTIADSDQLPGYSVETNVLPTKMRGKTPSYGKPRPLSMPADGNWMGIVDPFAKPRGNGRKGEDALCRYFSNERITPITEESASPMYRFSRPLTERHLVRGADYIRGSRCYINSDLHSSATIPFQEEGSKKKSASSSAKASSGEPSLLVSWLTRLKLLTH.

Residues 7 to 72 (WSPKQVVDWT…LEAVDLLCAL (66 aa)) form the SAM domain. In terms of domain architecture, CRIC spans 80–174 (TMKNLVLKLR…TAVQKDCLIA (95 aa)). The PDZ domain maps to 211–293 (EVHLPNVRPG…GVVLLLKKRP (83 aa)). 3 disordered regions span residues 308–333 (RWKP…MDAS), 362–389 (SFGY…SFLD), and 518–538 (PFQE…ASSG). The segment covering 311-329 (PPLVQTSPPPTTTQSPEST) has biased composition (low complexity). The region spanning 325–546 (SPESTMDASL…SGEPSLLVSW (222 aa)) is the DUF1170 domain. 2 positions are modified to phosphoserine: Ser381 and Ser383.

This sequence belongs to the CNKSR family. As to quaternary structure, interacts with epithelial sodium channel ENaC. Interacts directly with SCNN1A (ENaC subunit alpha) and SCNN1B (ENaC subunit beta) C-terminal tails. Interacts with ENaC regulatory proteins NEDD4L, RAF1 and SGK1. In terms of tissue distribution, expressed in kidney.

Its subcellular location is the cytoplasm. The protein resides in the apical cell membrane. Involved in transepithelial sodium transport. Regulates aldosterone-induced and epithelial sodium channel (ENaC)-mediated sodium transport through regulation of ENaC cell surface expression. Acts as a scaffold protein coordinating the assembly of an ENaC-regulatory complex (ERC). This Mus musculus (Mouse) protein is Connector enhancer of kinase suppressor of ras 3 (Cnksr3).